Reading from the N-terminus, the 722-residue chain is Dynein axonemal intermediate chain 7 (722 aa).

Over residues M1–V15 the composition is skewed to basic residues. Residues M1–R20 form a disordered region.

The protein belongs to the DNAI7 family. Part of the multisubunit axonemal dynein complex formed at least of two heavy chains and a number of intermediate and light chains. Associates with tubulin. Interacts with microtubule. Ubiquitinated. Ubiquitination leads to its degradation through the 26S proteasome. Ubiquitin-proteasome-mediated DNAI7 degradation occurs in mitosis.

It is found in the cell projection. It localises to the cilium. Its subcellular location is the cytoplasm. In terms of biological role, via its association with the multisubunit axonemal dynein complex, is potentially involved in the regulation of cilia function. May act as a cell cycle regulator. This Macaca fascicularis (Crab-eating macaque) protein is Dynein axonemal intermediate chain 7.